We begin with the raw amino-acid sequence, 360 residues long: DNA replication and repair protein RecF (360 aa).

Residue 30–37 coordinates ATP; the sequence is GHNGSGKT.

Belongs to the RecF family.

It is found in the cytoplasm. In terms of biological role, the RecF protein is involved in DNA metabolism; it is required for DNA replication and normal SOS inducibility. RecF binds preferentially to single-stranded, linear DNA. It also seems to bind ATP. This chain is DNA replication and repair protein RecF, found in Shewanella pealeana (strain ATCC 700345 / ANG-SQ1).